A 270-amino-acid polypeptide reads, in one-letter code: tRNA pseudouridine synthase A (270 aa).

D60 (nucleophile) is an active-site residue. Y118 is a substrate binding site.

The protein belongs to the tRNA pseudouridine synthase TruA family. Homodimer.

The enzyme catalyses uridine(38/39/40) in tRNA = pseudouridine(38/39/40) in tRNA. Its function is as follows. Formation of pseudouridine at positions 38, 39 and 40 in the anticodon stem and loop of transfer RNAs. The sequence is that of tRNA pseudouridine synthase A from Salmonella arizonae (strain ATCC BAA-731 / CDC346-86 / RSK2980).